The primary structure comprises 572 residues: Proline--tRNA ligase (572 aa).

The protein belongs to the class-II aminoacyl-tRNA synthetase family. ProS type 1 subfamily. In terms of assembly, homodimer.

It is found in the cytoplasm. The catalysed reaction is tRNA(Pro) + L-proline + ATP = L-prolyl-tRNA(Pro) + AMP + diphosphate. Catalyzes the attachment of proline to tRNA(Pro) in a two-step reaction: proline is first activated by ATP to form Pro-AMP and then transferred to the acceptor end of tRNA(Pro). As ProRS can inadvertently accommodate and process non-cognate amino acids such as alanine and cysteine, to avoid such errors it has two additional distinct editing activities against alanine. One activity is designated as 'pretransfer' editing and involves the tRNA(Pro)-independent hydrolysis of activated Ala-AMP. The other activity is designated 'posttransfer' editing and involves deacylation of mischarged Ala-tRNA(Pro). The misacylated Cys-tRNA(Pro) is not edited by ProRS. The protein is Proline--tRNA ligase of Bacillus licheniformis (strain ATCC 14580 / DSM 13 / JCM 2505 / CCUG 7422 / NBRC 12200 / NCIMB 9375 / NCTC 10341 / NRRL NRS-1264 / Gibson 46).